A 629-amino-acid chain; its full sequence is MKFYITTPIYYVNSEPHIGSAYTTIVADIIARYKRFMGYDVFFLTGTDEHGQKVLQAAQQAGKDPQEFCDELAEKFKRLWKELKITNDYFIRTTDEMHMKTVQEFVAKMKENGDVYKGIYKGWYCVPCETFWNEDEVIKEGEERFCPECKRPVKWVEEENYFFRLSKYRDSLLKYYEEHPDFVEPDFRRNEMLKILEGGLKDLSITRTTFKWGVPMKDDPEHVIYVWVDALINYISAIGYGWNDEMFNKWWPADLHLIGKEINRFHSIIWPAMLMSVGLPLPKKVFAHGWLTVNGQKISKSLGNAIDPRFFVKRYGNDVVRYYLIRDIMFGKDGDFSEERLVHRLNSDLANDYGNLLHRITAMIKKYFNGRLPSPSAQEGFDSWLKERFFETKDAYHELMDSYRLTEALDKIWEFIADVNKYFNDTKPWILGKEGNMERLGTVLYNSLEAVFKVALMTLPVMPDTSEEVFRRVSFEEKPSKEHLENWGVLKPGSTVIHGEPLFKKIDAKDFKKVVETVSAEQNAITIDDFSKVDLRIAKVLEAEKVPNSRKLLRLIIDLGTEKRQIVAGIAEHYRPEELVGKLIVVVANLKPAKLMGIESQGMLLAAKSGDTLRLLTVDGEITPGAKVS.

Residues 10 to 20 (YYVNSEPHIGS) carry the 'HIGH' region motif. Positions 125, 128, 146, and 149 each coordinate Zn(2+). Residues 297-301 (KISKS) carry the 'KMSKS' region motif. Lys300 contributes to the ATP binding site. Residues 529–629 (DFSKVDLRIA…GEITPGAKVS (101 aa)) enclose the tRNA-binding domain.

It belongs to the class-I aminoacyl-tRNA synthetase family. MetG type 2A subfamily. As to quaternary structure, homodimer. The cofactor is Zn(2+).

It is found in the cytoplasm. The catalysed reaction is tRNA(Met) + L-methionine + ATP = L-methionyl-tRNA(Met) + AMP + diphosphate. Functionally, is required not only for elongation of protein synthesis but also for the initiation of all mRNA translation through initiator tRNA(fMet) aminoacylation. In Thermotoga maritima (strain ATCC 43589 / DSM 3109 / JCM 10099 / NBRC 100826 / MSB8), this protein is Methionine--tRNA ligase (metG).